Consider the following 341-residue polypeptide: Radial spoke head 14 homolog (341 aa).

ARM repeat units follow at residues 16–55 (PTKA…DLMH), 57–96 (PEYV…IMAT), 99–138 (VGRV…LAQL), 139–178 (PKGA…LCLQ), 180–217 (DATE…AISI), 219–258 (LDGK…HATV), 260–300 (TEGK…MLAE), and 302–339 (PEGR…VIEW).

The protein belongs to the flagellar radial spoke RSP14 family. Component of the axonemal radial spoke complex 1 (RS1), at least composed of spoke head proteins RSPH1, RSPH3, RSPH9 and the cilia-specific component RSPH4A or sperm-specific component RSPH6A, spoke stalk proteins RSPH14, DNAJB13, DYDC1, ROPN1L and NME5, and the anchor protein IQUB.

Its subcellular location is the cytoplasm. It localises to the cytoskeleton. The protein resides in the flagellum axoneme. In terms of biological role, functions as part of axonemal radial spoke complexes that play an important part in the motility of sperm and cilia. The protein is Radial spoke head 14 homolog of Mus musculus (Mouse).